The sequence spans 293 residues: Notch homolog 2 N-terminal-like protein C (293 aa).

EGF-like domains follow at residues proline 42–glutamine 81, histidine 82–glutamine 120, threonine 123–glutamine 161, and tryptophan 162–glutamate 198. Disulfide bonds link cysteine 46–cysteine 59, cysteine 53–cysteine 69, cysteine 71–cysteine 80, cysteine 86–cysteine 97, cysteine 91–cysteine 108, cysteine 110–cysteine 119, cysteine 127–cysteine 139, cysteine 133–cysteine 149, cysteine 151–cysteine 160, cysteine 166–cysteine 177, cysteine 171–cysteine 186, cysteine 188–cysteine 197, cysteine 204–cysteine 216, cysteine 210–cysteine 225, cysteine 227–cysteine 236, cysteine 243–cysteine 254, and cysteine 248–cysteine 264. Asparagine 64 is a glycosylation site (N-linked (GlcNAc...) asparagine). An N-linked (GlcNAc...) asparagine glycan is attached at asparagine 173. One can recognise an EGF-like 5; calcium-binding domain in the interval aspartate 200 to aspartate 237. Positions leucine 239–glutamate 276 constitute an EGF-like 6 domain.

This sequence belongs to the NOTCH family. Interacts with NOTCH2. Interacts with DLL1; the interaction is direct. As to expression, expressed in radial glia neural stem cells during cortical development.

It is found in the secreted. Functionally, human-specific protein that promotes neural progenitor proliferation and evolutionary expansion of the brain neocortex by regulating the Notch signaling pathway. Able to promote neural progenitor self-renewal, possibly by down-regulating neuronal differentiation genes, thereby delaying the differentiation of neuronal progenitors and leading to an overall final increase in neuronal production. Acts by enhancing the Notch signaling pathway via two different mechanisms that probably work in parallel to reach the same effect. Enhances Notch signaling pathway in a non-cell-autonomous manner via direct interaction with NOTCH2. Also promotes Notch signaling pathway in a cell-autonomous manner through inhibition of cis DLL1-NOTCH2 interactions, which promotes neuronal differentiation. The sequence is that of Notch homolog 2 N-terminal-like protein C from Homo sapiens (Human).